A 336-amino-acid chain; its full sequence is tRNA (guanine(10)-N2)-dimethyltransferase (336 aa).

The THUMP domain maps to lysine 50–leucine 147.

The protein belongs to the methyltransferase superfamily. Trm-G10 family. As to quaternary structure, monomer.

The protein resides in the cytoplasm. It carries out the reaction guanosine(10) in tRNA + 2 S-adenosyl-L-methionine = N(2)-dimethylguanosine(10) in tRNA + 2 S-adenosyl-L-homocysteine + 2 H(+). Functionally, catalyzes the adenosylmethionine-dependent methylation of the exocyclic amino group (N(2)) of guanosine at position 10 of various tRNAs. Acts via a two-step process that leads to the formation of either N(2)-monomethyl (m(2)G) or N(2)-dimethylguanosine (m(2)(2)G). This is tRNA (guanine(10)-N2)-dimethyltransferase (trmG10) from Methanothermobacter thermautotrophicus (strain ATCC 29096 / DSM 1053 / JCM 10044 / NBRC 100330 / Delta H) (Methanobacterium thermoautotrophicum).